An 824-amino-acid chain; its full sequence is Disintegrin and metalloproteinase domain-containing protein 8 (824 aa).

An N-terminal signal peptide occupies residues 1–16 (MRGLGLWLLGAMMLPA). At 17 to 655 (IAPSRPWALM…EVHAASGSLP (639 aa)) the chain is on the extracellular side. Residues asparagine 67 and asparagine 91 are each glycosylated (N-linked (GlcNAc...) asparagine). In terms of domain architecture, Peptidase M12B spans 200–400 (RYVELYVVVD…PQSVCLANAP (201 aa)). Cystine bridges form between cysteine 310/cysteine 395, cysteine 351/cysteine 379, cysteine 353/cysteine 362, cysteine 435/cysteine 457, cysteine 448/cysteine 454, cysteine 466/cysteine 486, cysteine 473/cysteine 503, cysteine 498/cysteine 508, cysteine 566/cysteine 613, cysteine 613/cysteine 623, cysteine 617/cysteine 629, and cysteine 631/cysteine 640. Residue histidine 334 coordinates Zn(2+). Glutamate 335 is an active-site residue. Residues histidine 338 and histidine 344 each contribute to the Zn(2+) site. Positions 408 to 494 (GPVCGNLFVE…ECPEDAFQEN (87 aa)) constitute a Disintegrin domain. Residue asparagine 436 is glycosylated (N-linked (GlcNAc...) asparagine). An EGF-like domain is found at 609–641 (RSSNCSAQCHNHGVCNHKQECHCHAGWAPPHCA). A glycan (N-linked (GlcNAc...) asparagine) is linked at asparagine 612. Residues 656–676 (VFVVVVLVLLAVVLVTLAGII) traverse the membrane as a helical segment. The Cytoplasmic portion of the chain corresponds to 677 to 824 (VYRKARSRIL…KQGAGAPTAP (148 aa)). Disordered regions lie at residues 710 to 756 (VPAK…PVTV) and 776 to 824 (KPTF…PTAP). Residues 747–756 (RPPPAPPVTV) are compositionally biased toward pro residues. The segment covering 788–804 (PGAGAANPGPAEGAVGP) has biased composition (low complexity).

As to quaternary structure, interacts with FST3. It depends on Zn(2+) as a cofactor. Expressed on neutrophils and monocytes.

It is found in the membrane. In terms of biological role, possible involvement in extravasation of leukocytes. In Homo sapiens (Human), this protein is Disintegrin and metalloproteinase domain-containing protein 8 (ADAM8).